The chain runs to 215 residues: Cytochrome b6 (215 aa).

The helical transmembrane segment at 32–52 (IFYCLGGITFTCFLVQVATGF) threads the bilayer. Position 35 (cysteine 35) interacts with heme c. 2 residues coordinate heme b: histidine 86 and histidine 100. 3 helical membrane-spanning segments follow: residues 90 to 110 (ASMM…TGGF), 116 to 136 (STWI…VTGY), and 186 to 206 (LHTF…FLMI). Histidine 187 and histidine 202 together coordinate heme b.

The protein belongs to the cytochrome b family. PetB subfamily. As to quaternary structure, the 4 large subunits of the cytochrome b6-f complex are cytochrome b6, subunit IV (17 kDa polypeptide, PetD), cytochrome f and the Rieske protein, while the 4 small subunits are PetG, PetL, PetM and PetN. The complex functions as a dimer. Heme b is required as a cofactor. It depends on heme c as a cofactor.

The protein resides in the plastid. The protein localises to the chloroplast thylakoid membrane. Functionally, component of the cytochrome b6-f complex, which mediates electron transfer between photosystem II (PSII) and photosystem I (PSI), cyclic electron flow around PSI, and state transitions. The sequence is that of Cytochrome b6 from Tetradesmus obliquus (Green alga).